The following is a 243-amino-acid chain: UPF0173 metal-dependent hydrolase Caur_2542 (243 aa).

Belongs to the UPF0173 family.

The protein is UPF0173 metal-dependent hydrolase Caur_2542 of Chloroflexus aurantiacus (strain ATCC 29366 / DSM 635 / J-10-fl).